Here is an 805-residue protein sequence, read N- to C-terminus: Kinesin-like protein KIP3 (805 aa).

A Kinesin motor domain is found at 10-438 (SIVVAIRVRP…LKYANRAKEI (429 aa)). 192 to 199 (GATGCGKT) contributes to the ATP binding site. Residues 449–481 (LSRHVGSYLKMITEQKRQIEELREREEKMISLK) are a coiled coil. Residues 720–805 (NFSQKKVKWT…HQSLLATARK (86 aa)) are disordered. Residues 764 to 773 (MQDTTFNEQG) are compositionally biased toward polar residues. A compositionally biased stretch (low complexity) spans 774-783 (PSTPSAPTTA). Residues 792–805 (SLLTHQSLLATARK) show a composition bias toward polar residues.

The protein belongs to the TRAFAC class myosin-kinesin ATPase superfamily. Kinesin family. Kinesin II subfamily.

Its subcellular location is the cytoplasm. The protein localises to the cytoskeleton. In Saccharomyces cerevisiae (strain ATCC 204508 / S288c) (Baker's yeast), this protein is Kinesin-like protein KIP3 (KIP3).